The chain runs to 191 residues: FMN reductase (NADH) RutF (191 aa).

This sequence belongs to the non-flavoprotein flavin reductase family. RutF subfamily.

It carries out the reaction FMNH2 + NAD(+) = FMN + NADH + 2 H(+). Catalyzes the reduction of FMN to FMNH2 which is used to reduce pyrimidine by RutA via the Rut pathway. The sequence is that of FMN reductase (NADH) RutF from Escherichia coli O1:K1 / APEC.